The primary structure comprises 301 residues: tRNA dimethylallyltransferase (301 aa).

ATP is bound at residue 9-16; sequence GPTASGKS. 11–16 contributes to the substrate binding site; the sequence is TASGKS. Positions 34–37 are interaction with substrate tRNA; sequence DSMQ.

It belongs to the IPP transferase family. As to quaternary structure, monomer. Requires Mg(2+) as cofactor.

It catalyses the reaction adenosine(37) in tRNA + dimethylallyl diphosphate = N(6)-dimethylallyladenosine(37) in tRNA + diphosphate. Its function is as follows. Catalyzes the transfer of a dimethylallyl group onto the adenine at position 37 in tRNAs that read codons beginning with uridine, leading to the formation of N6-(dimethylallyl)adenosine (i(6)A). The sequence is that of tRNA dimethylallyltransferase from Corynebacterium efficiens (strain DSM 44549 / YS-314 / AJ 12310 / JCM 11189 / NBRC 100395).